A 289-amino-acid polypeptide reads, in one-letter code: NAD(P)H-hydrate epimerase (289 aa).

The region spanning 71–277 (AQTIDNELMS…SIVEKYNLKI (207 aa)) is the YjeF N-terminal domain. Position 122-126 (122-126 (NNGGD)) interacts with (6S)-NADPHX. K(+) is bound by residues N123 and D185. Residues 189–195 (GFSFRGE) and D218 contribute to the (6S)-NADPHX site. Residue S221 participates in K(+) binding.

This sequence belongs to the NnrE/AIBP family. The cofactor is K(+).

It catalyses the reaction (6R)-NADHX = (6S)-NADHX. The catalysed reaction is (6R)-NADPHX = (6S)-NADPHX. In terms of biological role, catalyzes the epimerization of the S- and R-forms of NAD(P)HX, a damaged form of NAD(P)H that is a result of enzymatic or heat-dependent hydration. This is a prerequisite for the S-specific NAD(P)H-hydrate dehydratase to allow the repair of both epimers of NAD(P)HX. The protein is NAD(P)H-hydrate epimerase of Plasmodium knowlesi (strain H).